We begin with the raw amino-acid sequence, 667 residues long: E3 ubiquitin-protein ligase Midline-1 (667 aa).

The segment at 10–60 (CPICLELFEDPLLLPCAHSLCFNCAHRILVSHCATNEPVESINAFQCPTCR) adopts an RING-type zinc-finger fold. 2 positions are modified to phosphoserine: serine 92 and serine 96. 2 B box-type zinc fingers span residues 116–165 (KVLC…IEPI) and 172–212 (GLMC…VAAL). Zn(2+)-binding residues include cysteine 119, cysteine 122, cysteine 134, cysteine 137, cysteine 142, cysteine 145, histidine 150, histidine 159, cysteine 175, histidine 178, cysteine 198, and histidine 204. The stretch at 205 to 264 (RDHQVAALSERYDKLKQNLESNLTNLIKRNTELETLLAKLIQTCQHVEVNASRQEAKLTE) forms a coiled coil. One can recognise a COS domain in the interval 320–379 (LKENDHARFLQTAKNITERVSMATASSQVLIPEINLNDTFDTFALDFSREKKLLECLDYL). Residues 381-484 (APNPPTIREE…EPGKLKTNSQ (104 aa)) form the Fibronectin type-III domain. Over residues 471-485 (SRSSEPGKLKTNSQP) the composition is skewed to polar residues. A disordered region spans residues 471–524 (SRSSEPGKLKTNSQPFKLDPKSAHRKLKVSHDNLTVERDESSSKKSHTPERFTS). The 178-residue stretch at 482–659 (NSQPFKLDPK…IITGLPIPDH (178 aa)) folds into the B30.2/SPRY domain. The segment covering 499-520 (VSHDNLTVERDESSSKKSHTPE) has biased composition (basic and acidic residues). Position 511 is a phosphoserine (serine 511).

The protein belongs to the TRIM/RBCC family. In terms of assembly, homodimer or heterodimer with MID2. Interacts with IGBP1.

The protein resides in the cytoplasm. Its subcellular location is the cytoskeleton. It catalyses the reaction S-ubiquitinyl-[E2 ubiquitin-conjugating enzyme]-L-cysteine + [acceptor protein]-L-lysine = [E2 ubiquitin-conjugating enzyme]-L-cysteine + N(6)-ubiquitinyl-[acceptor protein]-L-lysine.. Its function is as follows. Has E3 ubiquitin ligase activity towards IGBP1, promoting its monoubiquitination, which results in deprotection of the catalytic subunit of protein phosphatase PP2A, and its subsequent degradation by polyubiquitination. The sequence is that of E3 ubiquitin-protein ligase Midline-1 (Mid1) from Rattus norvegicus (Rat).